The primary structure comprises 78 residues: Beta-defensin 105A (78 aa).

A signal peptide spans 1–27 (MALIRKTFYFVFAVFFILVQQPSGCQA). Disulfide bonds link Cys-43–Cys-74, Cys-53–Cys-67, and Cys-57–Cys-73.

The protein belongs to the beta-defensin family.

Its subcellular location is the secreted. In terms of biological role, has antimicrobial activity. The chain is Beta-defensin 105A (DEFB105A) from Macaca fascicularis (Crab-eating macaque).